We begin with the raw amino-acid sequence, 90 residues long: MDDSWILEVKVTPKAKENKIVGFDGQALKVRVTEPPEKGKANDAVISLLAKALSLPKRDVTLIAGETSRKKKFLLPNRVQDIIFSLHIDV.

Belongs to the UPF0235 family.

The sequence is that of UPF0235 protein CPn_0497/CP_0257/CPj0497/CpB0517 from Chlamydia pneumoniae (Chlamydophila pneumoniae).